The chain runs to 299 residues: tRNA pseudouridine synthase B (299 aa).

Asp38 acts as the Nucleophile in catalysis.

The protein belongs to the pseudouridine synthase TruB family. Type 1 subfamily.

The enzyme catalyses uridine(55) in tRNA = pseudouridine(55) in tRNA. Responsible for synthesis of pseudouridine from uracil-55 in the psi GC loop of transfer RNAs. The protein is tRNA pseudouridine synthase B of Alkaliphilus oremlandii (strain OhILAs) (Clostridium oremlandii (strain OhILAs)).